We begin with the raw amino-acid sequence, 500 residues long: 5-taurinomethyluridine-[tRNA] synthase subunit GTPB3, mitochondrial (500 aa).

The transit peptide at 1 to 73 (MHFISCCLRR…RRLTRSLPAP (73 aa)) directs the protein to the mitochondrion. 3 residues coordinate 5,10-methylenetetrahydrofolate: Arg-53, Glu-111, and Lys-151. The region spanning 248 to 422 (GVHVVIAGST…LLTLLHNTLK (175 aa)) is the TrmE-type G domain. GTP is bound by residues 255–262 (GSTNAGKS), 281–285 (GTTRD), 302–305 (DTAG), and 373–376 (NESD). Asn-258 is a K(+) binding site. Ser-262 and Thr-283 together coordinate Mg(2+). Lys-500 is a binding site for 5,10-methylenetetrahydrofolate.

The protein belongs to the TRAFAC class TrmE-Era-EngA-EngB-Septin-like GTPase superfamily. TrmE GTPase family. Requires K(+) as cofactor.

It localises to the mitochondrion. The catalysed reaction is GTP + H2O = GDP + phosphate + H(+). In terms of biological role, GTPase component of the GTPBP3-MTO1 complex that catalyzes the 5-taurinomethyluridine (taum(5)U) modification at the 34th wobble position (U34) of mitochondrial tRNAs (mt-tRNAs), which plays a role in mt-tRNA decoding and mitochondrial translation. Taum(5)U formation on mammalian mt-tRNA requires the presence of both GTPBP3-mediated GTPase activity and MTO1 catalytic activity. The sequence is that of 5-taurinomethyluridine-[tRNA] synthase subunit GTPB3, mitochondrial (gtpbp3) from Danio rerio (Zebrafish).